The sequence spans 258 residues: Thiazole synthase (258 aa).

The active-site Schiff-base intermediate with DXP is the K98. Residues G159, 185–186 (AG), and 207–208 (NT) contribute to the 1-deoxy-D-xylulose 5-phosphate site.

It belongs to the ThiG family. As to quaternary structure, homotetramer. Forms heterodimers with either ThiH or ThiS.

Its subcellular location is the cytoplasm. The catalysed reaction is [ThiS sulfur-carrier protein]-C-terminal-Gly-aminoethanethioate + 2-iminoacetate + 1-deoxy-D-xylulose 5-phosphate = [ThiS sulfur-carrier protein]-C-terminal Gly-Gly + 2-[(2R,5Z)-2-carboxy-4-methylthiazol-5(2H)-ylidene]ethyl phosphate + 2 H2O + H(+). It functions in the pathway cofactor biosynthesis; thiamine diphosphate biosynthesis. Its function is as follows. Catalyzes the rearrangement of 1-deoxy-D-xylulose 5-phosphate (DXP) to produce the thiazole phosphate moiety of thiamine. Sulfur is provided by the thiocarboxylate moiety of the carrier protein ThiS. In vitro, sulfur can be provided by H(2)S. The polypeptide is Thiazole synthase (Bacillus thuringiensis subsp. konkukian (strain 97-27)).